Reading from the N-terminus, the 343-residue chain is MGSADERRFEVLRAIVADFVATKEPIGSKTLVERHNLGVSSATVRNDMAVLEAEGYITQPHTSSGRVPTEKGYREFVDRLDDVKPLSAAERRAIQNFLESGVDLDDVLRRAVRLLAQLTRQVAIVQYPTLSSSTVRHLEVIALTPARLLMVVITDSGRVDQRIVELGDVIDDHELSRLREMLGQALVGKKLSAASVAVADLAEQLRSPDGLGDAVGRSATVLLESLVEHSEERLLMGGTANLTRNAADFGGSLRSILEALEEQVVVLRLLAAQQEAGKVTVRIGHETAAEQMVGTSMVTTAYGTSDTVYGGMGVLGPTRMDYPGTIASVAAVAMYIGEVLGAR.

It belongs to the HrcA family.

Functionally, negative regulator of class I heat shock genes (grpE-dnaK-dnaJ and groELS operons). Prevents heat-shock induction of these operons. In Mycolicibacterium paratuberculosis (strain ATCC BAA-968 / K-10) (Mycobacterium paratuberculosis), this protein is Heat-inducible transcription repressor HrcA.